The primary structure comprises 235 residues: Cytochrome c-554 (235 aa).

The N-terminal stretch at 1 to 24 is a signal peptide; that stretch reads MKIMIACGLVAAALFTLTSGQSLA. Heme contacts are provided by cysteine 35, cysteine 38, histidine 39, histidine 51, cysteine 84, cysteine 87, histidine 88, cysteine 112, cysteine 115, histidine 116, histidine 126, cysteine 158, cysteine 161, histidine 162, and histidine 203. Residues 121-144 are disordered; sequence NFRGDHRKSGQAFEKSGKKTPRKD.

Post-translationally, binds 4 heme groups per subunit.

Its subcellular location is the periplasm. Its function is as follows. Involved in ammonia oxidation; accepts electrons directly from hydroxylamine oxidoreductase (HAO). This chain is Cytochrome c-554 (cycA1), found in Nitrosomonas europaea (strain ATCC 19718 / CIP 103999 / KCTC 2705 / NBRC 14298).